The sequence spans 366 residues: 3-dehydroquinate synthase (366 aa).

Residues 75–80 (DGEQYK), 109–113 (GVIGD), 133–134 (TT), K146, K155, and 173–176 (CLST) contribute to the NAD(+) site. Zn(2+) is bound by residues E188, H251, and H268.

Belongs to the sugar phosphate cyclases superfamily. Dehydroquinate synthase family. The cofactor is Co(2+). Zn(2+) serves as cofactor. NAD(+) is required as a cofactor.

The protein localises to the cytoplasm. The enzyme catalyses 7-phospho-2-dehydro-3-deoxy-D-arabino-heptonate = 3-dehydroquinate + phosphate. It participates in metabolic intermediate biosynthesis; chorismate biosynthesis; chorismate from D-erythrose 4-phosphate and phosphoenolpyruvate: step 2/7. Its function is as follows. Catalyzes the conversion of 3-deoxy-D-arabino-heptulosonate 7-phosphate (DAHP) to dehydroquinate (DHQ). The sequence is that of 3-dehydroquinate synthase from Vibrio campbellii (strain ATCC BAA-1116).